The chain runs to 78 residues: Large ribosomal subunit protein bL28 (78 aa).

The interval 1–20 (MSRVCQVTGKRPAVGNNRSH) is disordered.

This sequence belongs to the bacterial ribosomal protein bL28 family.

The protein is Large ribosomal subunit protein bL28 of Actinobacillus pleuropneumoniae serotype 7 (strain AP76).